Consider the following 211-residue polypeptide: Mitotic spindle assembly checkpoint protein MAD2B (211 aa).

The 191-residue stretch at 13 to 203 folds into the HORMA domain; sequence QVVADVLCEF…SDILKMQLYV (191 aa). The segment at 21 to 155 is mediates interaction with REV1 and REV3L and homodimerization; the sequence is EFLEVAVHLI…FTVLVHTREA (135 aa).

In terms of assembly, homooligomer. Heterodimer with REV3L. This dimer forms the minimal DNA polymerase zeta complex (Pol-zeta2), with REV3L bearing DNA polymerase catalytic activity, although its activity is very low in this context. Component of the tetrameric Pol-zeta complex (Pol-zeta4), which consists of REV3L, MAD2L2, POLD2 and POLD3; Pol-zeta4 is the fully active form of DNA polymerase zeta. Component of the shieldin complex, consisting of SHLD1, SHLD2, SHLD3 and MAD2L2/REV7. Within the complex, SHLD2 forms a scaffold which interacts with a SHLD3-MAD2L2 subcomplex via its N-terminus, and with SHLD1 via its C-terminus. Interacts with REV1. Interacts with ADAM9. Interacts with CHAMP1. Interacts with FZR1 (in complex with the anaphase promoting complex APC). May interact with CDC20. Interacts with RAN. Interacts with ELK1; the interaction is direct and recruits MAD2L2 to ELK1-specific promoters. May interact with the JNK kinases MAPK8 and/or MAPK9 to stimulate ELK1 phosphorylation and transcriptional activity upon DNA damage. Interacts with TCF7L2; prevents its binding to promoters and negatively modulates its transcriptional activity. Interacts with YY1AP1. Interacts with PRCC; the interaction is direct. Interacts with POGZ. Interacts with ASTE1.

It is found in the nucleus. The protein resides in the cytoplasm. The protein localises to the cytoskeleton. Its subcellular location is the spindle. Functionally, adapter protein able to interact with different proteins and involved in different biological processes. Mediates the interaction between the error-prone DNA polymerase zeta catalytic subunit REV3L and the inserter polymerase REV1, thereby mediating the second polymerase switching in translesion DNA synthesis. Translesion DNA synthesis releases the replication blockade of replicative polymerases, stalled in presence of DNA lesions. Component of the shieldin complex, which plays an important role in repair of DNA double-stranded breaks (DSBs). During G1 and S phase of the cell cycle, the complex functions downstream of TP53BP1 to promote non-homologous end joining (NHEJ) and suppress DNA end resection. Mediates various NHEJ-dependent processes including immunoglobulin class-switch recombination, and fusion of unprotected telomeres. May also regulate another aspect of cellular response to DNA damage through regulation of the JNK-mediated phosphorylation and activation of the transcriptional activator ELK1. Inhibits the FZR1- and probably CDC20-mediated activation of the anaphase promoting complex APC thereby regulating progression through the cell cycle. Regulates TCF7L2-mediated gene transcription and may play a role in epithelial-mesenchymal transdifferentiation. In Bos taurus (Bovine), this protein is Mitotic spindle assembly checkpoint protein MAD2B (MAD2L2).